A 349-amino-acid chain; its full sequence is Ribosomal RNA small subunit methyltransferase C (349 aa).

Belongs to the methyltransferase superfamily. RsmC family. In terms of assembly, monomer.

The protein resides in the cytoplasm. It catalyses the reaction guanosine(1207) in 16S rRNA + S-adenosyl-L-methionine = N(2)-methylguanosine(1207) in 16S rRNA + S-adenosyl-L-homocysteine + H(+). Specifically methylates the guanine in position 1207 of 16S rRNA in the 30S particle. This is Ribosomal RNA small subunit methyltransferase C from Psychromonas ingrahamii (strain DSM 17664 / CCUG 51855 / 37).